Reading from the N-terminus, the 326-residue chain is G-protein coupled receptor 1 (326 aa).

N-acetylserine is present on S2. The Extracellular segment spans residues 2 to 23; the sequence is SAVLTAGGGLTAGDRSIITAIN. The chain crosses the membrane as a helical span at residues 24–44; that stretch reads TGASSLSFVGSAFIVLCYCLF. Over 45-51 the chain is Cytoplasmic; sequence KELRKFS. The chain crosses the membrane as a helical span at residues 52 to 72; the sequence is FKLVFYLALSDMLCSFFLIVG. At 73-84 the chain is on the extracellular side; sequence DPSKGFICYAQG. C80 and C151 are joined by a disulfide. A helical membrane pass occupies residues 85–105; sequence YTTHFFCVASFLWTTTIAFTL. Residues 106 to 120 lie on the Cytoplasmic side of the membrane; that stretch reads HRTVVKHKTDVEDLE. The chain crosses the membrane as a helical span at residues 121-141; the sequence is AMFHLYVWGTSLVVTVIRSFG. Residues 142-160 lie on the Extracellular side of the membrane; sequence NNHSHLGPWCWTQTGLKGK. N143 is a glycosylation site (N-linked (GlcNAc...) asparagine). A helical membrane pass occupies residues 161 to 181; that stretch reads AVHFLTFYAPLWGAILYNGFT. Topologically, residues 182-213 are cytoplasmic; sequence YFQVIRMLRNARRMAVGMSDRVDQFDNRAELK. Residues 214–234 traverse the membrane as a helical segment; sequence VLNRWGYYPLILIGSWAFGTI. The Extracellular portion of the chain corresponds to 235–246; sequence NRIHDFIEPGHK. Residues 247-267 form a helical membrane-spanning segment; it reads IFWLSVLDVGTAALMGLFNSI. The Cytoplasmic segment spans residues 268–326; it reads AYGFNSSVRRAIHERLELFLPERLYRWLPSNFRPKNHLILHQQQQQRSEMVSLKTEDQQ.

Belongs to the G-protein coupled receptor 2 family. In terms of assembly, interacts with GPA1. Mostly present in the meristematic regions. Expressed at low levels in seedlings, vascular tissues of cotyledons, hypocotyl, and roots, stems, leaves, flowering buds and siliques. In dark-grown seedlings, localized in the cotyledons and the hook.

Its subcellular location is the cell membrane. Its function is as follows. Together with GPA1, may regulate the cell cycle via a signaling cascade that uses phosphatidylinositol-specific phospholipase C (PI-PLC) as an effector and inositol 1,4,5-trisphosphate(IP(3)) as a second messenger. Promotes PI-PLC activity and IP(3) accumulation. Involved in the blue light (BL) signaling. Together with GPA1 and ADT3, required for BL-mediated synthesis of phenylpyruvate and subsequently of phenylalanine (Phe), in etiolated seedlings. Probably involved in cytokinin signal transduction. Plays a positive role in gibberellin- (GA) and brassinosteroid- (BR) regulated seed germination, probably independently of a heterotrimeric G-protein. Mediates seed dormancy abolition, and promotes seed germination and flowering. This chain is G-protein coupled receptor 1 (GCR1), found in Arabidopsis thaliana (Mouse-ear cress).